The primary structure comprises 519 residues: ATP synthase subunit alpha, mitochondrial (519 aa).

188-195 (GDRQTGKS) contributes to the ATP binding site.

It belongs to the ATPase alpha/beta chains family. F-type ATPases have 2 components, CF(1) - the catalytic core - and CF(0) - the membrane proton channel. CF(1) has five subunits: alpha(3), beta(3), gamma(1), delta(1), epsilon(1). CF(0) has three main subunits: a, b and c.

It is found in the mitochondrion. Its subcellular location is the mitochondrion inner membrane. Its function is as follows. Mitochondrial membrane ATP synthase (F(1)F(0) ATP synthase or Complex V) produces ATP from ADP in the presence of a proton gradient across the membrane which is generated by electron transport complexes of the respiratory chain. F-type ATPases consist of two structural domains, F(1) - containing the extramembraneous catalytic core, and F(0) - containing the membrane proton channel, linked together by a central stalk and a peripheral stalk. During catalysis, ATP synthesis in the catalytic domain of F(1) is coupled via a rotary mechanism of the central stalk subunits to proton translocation. Subunits alpha and beta form the catalytic core in F(1). Rotation of the central stalk against the surrounding alpha(3)beta(3) subunits leads to hydrolysis of ATP in three separate catalytic sites on the beta subunits. Subunit alpha does not bear the catalytic high-affinity ATP-binding sites. This chain is ATP synthase subunit alpha, mitochondrial (atp1), found in Dictyostelium citrinum (Slime mold).